Reading from the N-terminus, the 240-residue chain is Uridylate kinase (240 aa).

13 to 16 is an ATP binding site; sequence KASG. The interval 21–26 is involved in allosteric activation by GTP; the sequence is GAQGFG. Residue Gly55 participates in UMP binding. Residues Gly56 and Arg60 each coordinate ATP. Residues Asp75 and 136-143 contribute to the UMP site; that span reads TGNPFFTT. ATP contacts are provided by Thr163, Gln164, Tyr169, and Asp172.

It belongs to the UMP kinase family. Homohexamer.

It localises to the cytoplasm. The enzyme catalyses UMP + ATP = UDP + ADP. Its pathway is pyrimidine metabolism; CTP biosynthesis via de novo pathway; UDP from UMP (UMPK route): step 1/1. Its activity is regulated as follows. Allosterically activated by GTP. Inhibited by UTP. Catalyzes the reversible phosphorylation of UMP to UDP. The chain is Uridylate kinase from Rhizobium etli (strain ATCC 51251 / DSM 11541 / JCM 21823 / NBRC 15573 / CFN 42).